The sequence spans 526 residues: Secreted triacylglycerol lipase LIP4 (526 aa).

The signal sequence occupies residues 1–26 (MVRLSYVRFGVAWCIAIIIVSGFSNA). Asn186 is a glycosylation site (N-linked (GlcNAc...) asparagine). Ser195 acts as the Nucleophile in catalysis. Asn228 is a glycosylation site (N-linked (GlcNAc...) asparagine). Active-site residues include Asp342 and His376. A glycan (N-linked (GlcNAc...) asparagine) is linked at Asn377. The disordered stretch occupies residues 412 to 526 (TGPSASSSAG…TMPAPPLMER (115 aa)). 2 stretches are compositionally biased toward low complexity: residues 413–423 (GPSASSSAGGP) and 430–457 (TGGH…HAPA). Asn462 carries N-linked (GlcNAc...) asparagine glycosylation. Over residues 480-490 (PSTGATSPAPS) the composition is skewed to low complexity. Positions 516-526 (RTMPAPPLMER) are enriched in pro residues.

Belongs to the AB hydrolase superfamily. Lipase family. Class Lip subfamily.

The protein resides in the secreted. The catalysed reaction is a triacylglycerol + H2O = a diacylglycerol + a fatty acid + H(+). It carries out the reaction a monoacylglycerol + H2O = glycerol + a fatty acid + H(+). The enzyme catalyses a diacylglycerol + H2O = a monoacylglycerol + a fatty acid + H(+). In terms of biological role, secreted lipase that hydrolyzes acylglycerol lipids such as triacylglycerols and consequently releases free fatty acid. Can hydrolyze 4-nitrophenyl palmitate to release 4-nitrophenol and palmitoic acid. Due to an absence of fatty acid synthase genes in Malassezia species, secretory lipases are essential for the yeast to generate free fatty acids from degradation of sebum and assimilate them as lipid sources for growth. Plays important roles not only in lipid metabolism but also in the immune response of host cells and pathogenesis. The protein is Secreted triacylglycerol lipase LIP4 of Malassezia furfur (Pityriasis versicolor infection agent).